A 190-amino-acid polypeptide reads, in one-letter code: Prostaglandin-H2 D-isomerase (190 aa).

The N-terminal stretch at 1–22 (MATHHTLWMGLALLGVLGDLQA) is a signal peptide. Asn-51 carries N-linked (GlcNAc...) asparagine glycosylation. Cys-65 (nucleophile) is an active-site residue. Asn-78 carries N-linked (GlcNAc...) asparagine glycosylation. Cys-89 and Cys-186 are joined by a disulfide.

Belongs to the calycin superfamily. Lipocalin family. As to quaternary structure, monomer.

The protein localises to the rough endoplasmic reticulum. The protein resides in the nucleus membrane. Its subcellular location is the golgi apparatus. It localises to the cytoplasm. It is found in the perinuclear region. The protein localises to the secreted. It catalyses the reaction prostaglandin H2 = prostaglandin D2. Its function is as follows. Catalyzes the conversion of PGH2 to PGD2, a prostaglandin involved in smooth muscle contraction/relaxation and a potent inhibitor of platelet aggregation. Involved in a variety of CNS functions, such as sedation, NREM sleep and PGE2-induced allodynia, and may have an anti-apoptotic role in oligodendrocytes. Binds small non-substrate lipophilic molecules, including biliverdin, bilirubin, retinal, retinoic acid and thyroid hormone, and may act as a scavenger for harmful hydrophobic molecules and as a secretory retinoid and thyroid hormone transporter. Possibly involved in development and maintenance of the blood-brain, blood-retina, blood-aqueous humor and blood-testis barrier. It is likely to play important roles in both maturation and maintenance of the central nervous system and male reproductive system. Involved in PLA2G3-dependent maturation of mast cells. PLA2G3 is secreted by immature mast cells and acts on nearby fibroblasts upstream to PTDGS to synthesize PGD2, which in turn promotes mast cell maturation and degranulation via PTGDR. The polypeptide is Prostaglandin-H2 D-isomerase (PTGDS) (Gorilla gorilla gorilla (Western lowland gorilla)).